The primary structure comprises 310 residues: Protein TIFY 6A (310 aa).

The Tify domain maps to 141–176 (SKPLPPQLTIFYAGSVLVYQDIAPEKAQAIMLLAGN). The Jas motif lies at 259-284 (PQTRKASLARFLEKRKERVINVSPYY). The short motif at 261–268 (TRKASLAR) is the Nuclear localization signal element.

This sequence belongs to the TIFY/JAZ family. In terms of assembly, homo- and heterodimer. Interacts with MYC2, AFPH2/NINJA, TIFY10A/JAZ1, TIFY6B/JAZ3, TIFY5A/JAZ8, TIFY9/JAZ10 and TIFY3A/JAZ11. Interacts with RHD6 and RSL1. In terms of processing, ubiquitinated. Targeted for degradation by the SCF(COI1) E3 ubiquitin ligase-proteasome pathway during jasmonate signaling.

The protein localises to the nucleus. Repressor of jasmonate responses. Interacts with and suppresses RHD6 and RSL1 transcription factor activities to negatively regulate jasmonate-stimulated root hair development. The polypeptide is Protein TIFY 6A (TIFY6A) (Arabidopsis thaliana (Mouse-ear cress)).